A 129-amino-acid polypeptide reads, in one-letter code: Omega-scoloptoxin(05)-Ssm1a (129 aa).

An N-terminal signal peptide occupies residues 1–24 (MPSLCIIALFGTLTFYTLIPSIHT). A propeptide spanning residues 25 to 46 (LKCVRCDGPMSNYDCKTTYPAA) is cleaved from the precursor.

It belongs to the scoloptoxin-05 family. Post-translationally, contains 3 disulfide bonds. In terms of tissue distribution, expressed by the venom gland.

It is found in the secreted. In terms of biological role, toxin that increase voltage-gated calcium channel (Cav) currents in DRG neurons by 70% and 120%, when 1 uM and 10 uM are tested, respectively. The sequence is that of Omega-scoloptoxin(05)-Ssm1a from Scolopendra mutilans (Chinese red-headed centipede).